The sequence spans 557 residues: NAD(P)H-quinone oxidoreductase chain 4 (557 aa).

The next 14 helical transmembrane spans lie at 25–45, 57–77, 111–131, 133–153, 157–177, 189–209, 230–250, 264–284, 298–318, 327–347, 353–373, 397–417, 438–458, and 485–505; these read FPWLSLSILFPIAGSLLVPFI, YALFIALTTFLITVGAYLKGF, LILLTSFITALAVLAAWPVSF, PKLFFFLILAMDGGQIAVFAV, LLFFLAWELELLPVYLLLAIW, FIIYTAGSSLFILLAGLAMGF, GFQLLCYGGLLIAFGVKLPIV, TAPVHMLLAGILLKMGGYALL, FAPLLIVLGVVNIIYAALTSF, IAYSSISHMGFVLIGIGSFST, AMLQMISHGLIGASLFFLVGA, FALWTVCSLASLALPGMSGFV, IVIAGLAAIGVILTPIYLLSM, and IYIIGSLLVPIIGIGLYPRIM.

This sequence belongs to the complex I subunit 4 family.

It localises to the cellular thylakoid membrane. It carries out the reaction a plastoquinone + NADH + (n+1) H(+)(in) = a plastoquinol + NAD(+) + n H(+)(out). It catalyses the reaction a plastoquinone + NADPH + (n+1) H(+)(in) = a plastoquinol + NADP(+) + n H(+)(out). Functionally, NDH-1 shuttles electrons from NAD(P)H, via FMN and iron-sulfur (Fe-S) centers, to quinones in the respiratory chain. The immediate electron acceptor for the enzyme in this species is believed to be plastoquinone. Couples the redox reaction to proton translocation (for every two electrons transferred, four hydrogen ions are translocated across the cytoplasmic membrane), and thus conserves the redox energy in a proton gradient. The protein is NAD(P)H-quinone oxidoreductase chain 4 of Prochlorococcus marinus (strain SARG / CCMP1375 / SS120).